Consider the following 391-residue polypeptide: Glycerophosphocholine acyltransferase 1 (391 aa).

The Cytoplasmic portion of the chain corresponds to 1 to 66 (MSNNEDPINE…IAKQAEEHES (66 aa)). The helical transmembrane segment at 67-87 (FINKVTHLLGVLGFGGFCFLL) threads the bilayer. Over 88-92 (GARPQ) the chain is Lumenal. A helical membrane pass occupies residues 93–113 (DIPYVYCLFFFIFVPLRWIYY). The Cytoplasmic segment spans residues 114-119 (RFKKWH). A helical transmembrane segment spans residues 120–140 (YFLLDFCYYANTIFLVDLLLY). At 141 to 144 (PKDE) the chain is on the lumenal side. The chain crosses the membrane as a helical span at residues 145–165 (KLFMVCFSFAEGPLAWALIVW). At 166–172 (RCSLVFS) the chain is on the cytoplasmic side. A helical transmembrane segment spans residues 173 to 193 (SVDKIVSVLIHLLPGLVFFTI). Over 194–226 (RWWNPATFEAMHPEGTSGRASWPYVEDKSFLFT) the chain is Lumenal. A helical membrane pass occupies residues 227 to 247 (WLFLVPLVAYFLWQLLYFLIV). Over 248 to 294 (NVLRRQRLLRDPEVMTSYRELSKKAQKANNVWWRLSGLLGDQNRMLM) the chain is Cytoplasmic. The helical transmembrane segment at 295–315 (YILLQALFTVATTALTVPIFL) threads the bilayer. Topologically, residues 316 to 318 (SYE) are lumenal. The helical transmembrane segment at 319–339 (LHAVFQILKVSAAVWNGGSFL) threads the bilayer. Topologically, residues 340 to 391 (LDVMPRQVILKEKKKSELQPAHIQQYHSEPKQDQSPNSMEIRMKTIHSAEEQ) are cytoplasmic. The segment at 354-391 (KSELQPAHIQQYHSEPKQDQSPNSMEIRMKTIHSAEEQ) is disordered. A compositionally biased stretch (basic and acidic residues) spans 380–391 (IRMKTIHSAEEQ).

It belongs to the GPC1 family.

It localises to the membrane. It carries out the reaction sn-glycerol 3-phosphocholine + an acyl-CoA = a monoacyl-sn-glycero-3-phosphocholine + CoA. It catalyses the reaction sn-glycero-3-phosphoethanolamine + an acyl-CoA = a monoacyl-sn-glycero-3-phosphoethanolamine + CoA. The enzyme catalyses sn-glycerol 3-phosphocholine + hexadecanoyl-CoA = hexadecanoyl-sn-glycero-3-phosphocholine + CoA. The catalysed reaction is (9Z)-hexadecenoyl-CoA + sn-glycerol 3-phosphocholine = (9Z-hexadecenoyl)-sn-glycero-3-phosphocholine + CoA. It carries out the reaction (9Z,12Z)-octadecadienoyl-CoA + sn-glycerol 3-phosphocholine = (9Z,12Z-octadecadienoyl)-sn-glycero-3-phosphocholine + CoA. It catalyses the reaction (12R)-hydroxy-(9Z)-octadecenoyl-CoA + sn-glycerol 3-phosphocholine = (12R-hydroxy-9Z-octadecenoyl)-sn-glycero-3-phosphocholine + CoA. The enzyme catalyses (9Z,12Z,15Z)-octadecatrienoyl-CoA + sn-glycerol 3-phosphocholine = (9Z,12Z,15Z-octadecatrienoyl)-sn-glycero-3-phosphocholine + CoA. The catalysed reaction is sn-glycerol 3-phosphocholine + (9Z)-octadecenoyl-CoA = (9Z-octadecenoyl)-sn-glycero-3-phosphocholine + CoA. Its function is as follows. Glycerophosphocholine acyltransferase (GPCAT) that utilizes acyl-CoA to acylate glycero-3-phosphocholine (GPC), forming lysophosphatidylcholine (LPC). Shows broad acyl specificities with a preference for 16:0-CoA, polyunsaturated acyl-CoA, and the hydroxylated ricinoleoyl-CoA. Also catalyzes the acylation of glycero-3-phosphoethanolamine (GPE) with acyl-CoA. In addition to acyl-CoA, GPCAT efficiently utilizes LPC and lysophosphatidylethanolamine (LPE) as acyl donors in the acylation of GPC. Contributes to the maintenance of phosphatidylcholine (PC) homeostasis and might also have specific functions in acyl editing of PC, such as transferring acyl groups modified at the sn-2 position of PC to the sn-1. The protein is Glycerophosphocholine acyltransferase 1 of Ricinus communis (Castor bean).